The primary structure comprises 156 residues: MAGFIGKERHSIDEKGRLMIPARFRRKFADAGSCDGGASEYGRFGALYVMKTSDGSLELYEPSVWEGMGKSISALSDFNPEERLLKTLMYECLEMVELDRQGRIPLSREFLEHAGISGEVVILGADTKMIVWEPARLRGVVDGSSGRFAALAGRYF.

SpoVT-AbrB domains follow at residues 7–64 and 93–136; these read KERH…EPSV and LEMV…EPAR.

This sequence belongs to the MraZ family. As to quaternary structure, forms oligomers.

The protein localises to the cytoplasm. Its subcellular location is the nucleoid. The protein is Transcriptional regulator MraZ of Chlorobium phaeovibrioides (strain DSM 265 / 1930) (Prosthecochloris vibrioformis (strain DSM 265)).